Reading from the N-terminus, the 415-residue chain is WD repeat and FYVE domain-containing protein 2 (415 aa).

4 WD repeats span residues 71–103 (HHFMPVAPTSLYYSEETYKLLVGLINGNVYEFS), 119–148 (CHAGPISGLGFALSSELIFSCSRDKSIVWH), 202–232 (AHTNAITSLTWDGNKKVLYSGSSDHLIIMWD), and 245–284 (GHNGKVTTLCAAPAAKRLFSADEHGKLMCWDMNCKRVETP). An FYVE-type zinc finger spans residues 286–357 (WKTSDCCQKC…ICNDCNARMK (72 aa)). Residues C292, C295, C319, C322, C327, C330, C349, and C352 each coordinate Zn(2+). The stretch at 373–403 (EIHTGITAMHLQETLGLLVTSGQNRVIMIWD) is one WD 5 repeat.

Its function is as follows. Plays a role in coelomocyte endocytosis. The protein is WD repeat and FYVE domain-containing protein 2 (wdfy-2) of Caenorhabditis elegans.